Consider the following 292-residue polypeptide: uncharacterized protein (292 aa).

2 disordered regions span residues 29 to 50 and 166 to 292; these read SEKP…LRDS and VKRK…EELK. Ser-50 is subject to Phosphoserine. Composition is skewed to polar residues over residues 176-189 and 208-217; these read NSKN…PVNN and GSPTNFSKLI. The span at 221 to 239 shows a compositional bias: basic and acidic residues; it reads YKDEWLQQQKADSDRRTPK. Composition is skewed to polar residues over residues 240–250 and 260–270; these read TSEASVSTQST and DTETPQNSETP.

In terms of processing, phosphorylated upon DNA damage.

This is an uncharacterized protein from Rattus norvegicus (Rat).